Reading from the N-terminus, the 205-residue chain is V-type ATP synthase subunit E (205 aa).

The protein belongs to the V-ATPase E subunit family.

Its function is as follows. Produces ATP from ADP in the presence of a proton gradient across the membrane. This is V-type ATP synthase subunit E from Treponema denticola (strain ATCC 35405 / DSM 14222 / CIP 103919 / JCM 8153 / KCTC 15104).